A 512-amino-acid chain; its full sequence is MTEPTQPNAAPQNAVELDDNQIIAERREKLRALREQGVAYPNDFRPTHHAADLQTEYADADKDALETKALHVALAGRMMLKRVMGKASFATVRDGSGQIQFFITPADVGEATYEAFKKWDLGDIVAAKGVLFRTNKGELSVRCTELRLLSKALRPLPDKFHGLADQEMRYRQRYVDLIVTDEARKTFVARTKAVSSIRKFMAEADFMEVETPMLHPIPGGAAAKPFVTHHNALDMQMFLRIAPELYLKRLVVGGFERVFEINRNFRNEGVSPRHNPEFTMMEFYAAYTDYKWLMDFTEQLIRQAAVDALGNAAITYQGRELDLSKPFHRLTITQAIQKYAPQYSDAQLADGAFLRTELKKFGVDATQPAFLNAGIGALQLALFEETAESQLWEPTFIIDYPIEVSPLARASDSVDGITERFELFITGREIANGFSELNDPEDQAARFKKQVDQKDAGDEEAMYYDADYIRALEYGMPPAGGCGIGIDRLVMLLTDSPSIRDVILFPHLRRED.

The Mg(2+) site is built by E422 and E429.

The protein belongs to the class-II aminoacyl-tRNA synthetase family. Homodimer. It depends on Mg(2+) as a cofactor.

Its subcellular location is the cytoplasm. The enzyme catalyses tRNA(Lys) + L-lysine + ATP = L-lysyl-tRNA(Lys) + AMP + diphosphate. The sequence is that of Lysine--tRNA ligase from Paraburkholderia phymatum (strain DSM 17167 / CIP 108236 / LMG 21445 / STM815) (Burkholderia phymatum).